A 104-amino-acid polypeptide reads, in one-letter code: Large ribosomal subunit protein uL23 (104 aa).

This sequence belongs to the universal ribosomal protein uL23 family. As to quaternary structure, part of the 50S ribosomal subunit. Contacts protein L29, and trigger factor when it is bound to the ribosome.

In terms of biological role, one of the early assembly proteins it binds 23S rRNA. One of the proteins that surrounds the polypeptide exit tunnel on the outside of the ribosome. Forms the main docking site for trigger factor binding to the ribosome. This Ralstonia nicotianae (strain ATCC BAA-1114 / GMI1000) (Ralstonia solanacearum) protein is Large ribosomal subunit protein uL23.